The primary structure comprises 174 residues: 16S rRNA aminocarboxypropyltransferase (174 aa).

The S-adenosyl-L-methionine site is built by T26, L73, L97, and S116.

It belongs to the TDD superfamily. TSR3 family.

The protein resides in the cytoplasm. It catalyses the reaction an N(1)-methylpseudouridine in rRNA + S-adenosyl-L-methionine = N(1)-methyl-N(3)-[(3S)-3-amino-3-carboxypropyl]pseudouridine in rRNA + S-methyl-5'-thioadenosine + H(+). Its function is as follows. Aminocarboxypropyltransferase that catalyzes the aminocarboxypropyl transfer on pseudouridine corresponding to position 914 in M.jannaschii 16S rRNA. It constitutes the last step in biosynthesis of the hypermodified N1-methyl-N3-(3-amino-3-carboxypropyl) pseudouridine (m1acp3-Psi). The protein is 16S rRNA aminocarboxypropyltransferase of Methanosarcina acetivorans (strain ATCC 35395 / DSM 2834 / JCM 12185 / C2A).